Consider the following 521-residue polypeptide: MGLGKKLSVAVAASFMSLTISLPGVQAAENPQLKENLTNFVPKHSLVQSELPSVSDKAIKQYLKQNGKVFKGNPSERLKLIDQTTDDLGYKHFRYVPVVNGVPVKDSQVIIHVDKSNNVYAINGELNNDVSAKTANSKKLSANQALDHAYKAIGKSPEAVSNGTVANKNKAELKAAATKDGKYRLAYDVTIRYIEPEPANWEVTVDAETGKILKKQNKVEHAATTGTGTTLKGKTVSLNISSESGKYVLRDLSKPTGTQIITYDLQNREYNLPGTLVSSTTNQFTTSSQRAAVDAHYNLGKVYDYFYQKFNRNSYDNKGGKIVSSVHYGSRYNNAAWIGDQMIYGDGDGSFFSPLSGSMDVTAHEMTHGVTQETANLNYENQPGALNESFSDVFGYFNDTEDWDIGEDITVSQPALRSLSNPTKYGQPDNFKNYKNLPNTDAGDYGGVHTNSGIPNKAAYNTITKIGVNKAEQIYYRALTVYLTPSSTFKDAKAALIQSARDLYGSQDAASVEAAWNAVGL.

Positions 1–27 (MGLGKKLSVAVAASFMSLTISLPGVQA) are cleaved as a signal peptide. The propeptide at 28-221 (AENPQLKENL…ILKKQNKVEH (194 aa)) is activation peptide. Glutamine 283 and aspartate 360 together coordinate Ca(2+). Histidine 364 lines the Zn(2+) pocket. Residue glutamate 365 is part of the active site. The Zn(2+) site is built by histidine 368 and glutamate 388. Ca(2+) contacts are provided by aspartate 399, aspartate 402, aspartate 404, glutamate 407, and valine 411. Residue histidine 449 is the Proton donor of the active site.

This sequence belongs to the peptidase M4 family. Requires Ca(2+) as cofactor. Zn(2+) is required as a cofactor.

The protein resides in the secreted. It carries out the reaction Similar, but not identical, to that of thermolysin.. Its function is as follows. Extracellular zinc metalloprotease. The polypeptide is Bacillolysin (npr) (Bacillus amyloliquefaciens (Bacillus velezensis)).